We begin with the raw amino-acid sequence, 409 residues long: NADH-ubiquinone oxidoreductase chain 4 (409 aa).

The next 13 membrane-spanning stretches (helical) occupy residues 10–30 (LWLF…FLIF), 44–64 (SYSF…IVIS), 76–96 (ILVF…LYMF), 98–118 (ELSM…IEKI), 120–140 (SSYY…FVYF), 160–180 (FFIL…HLWL), 194–214 (LLAG…LGSL), 221–241 (VWIL…VFQS), 245–265 (ALAA…LVFI), 271–291 (ISSV…FYLI), 305–325 (FMSS…VVFL), 353–373 (MFVM…FLIT), and 389–409 (VGFS…SVFY).

It belongs to the complex I subunit 4 family.

The protein resides in the mitochondrion membrane. The enzyme catalyses a ubiquinone + NADH + 5 H(+)(in) = a ubiquinol + NAD(+) + 4 H(+)(out). Its function is as follows. Core subunit of the mitochondrial membrane respiratory chain NADH dehydrogenase (Complex I) that is believed to belong to the minimal assembly required for catalysis. Complex I functions in the transfer of electrons from NADH to the respiratory chain. The immediate electron acceptor for the enzyme is believed to be ubiquinone. The sequence is that of NADH-ubiquinone oxidoreductase chain 4 from Caenorhabditis elegans.